The sequence spans 347 residues: Heat-inducible transcription repressor HrcA (347 aa).

It belongs to the HrcA family.

In terms of biological role, negative regulator of class I heat shock genes (grpE-dnaK-dnaJ and groELS operons). Prevents heat-shock induction of these operons. This is Heat-inducible transcription repressor HrcA from Mycobacterium sp. (strain JLS).